We begin with the raw amino-acid sequence, 32 residues long: MSDIN-like toxin proprotein 1 (32 aa).

Positions 1–10 are excised as a propeptide; the sequence is MSDINATRLP. A cross-link (cyclopeptide (Ile-Pro)) is located at residues 11 to 18; that stretch reads IFWFIYFP. A propeptide spanning residues 19–32 is cleaved from the precursor; that stretch reads CVSDVDSTLTRGER.

It belongs to the MSDIN fungal toxin family. Processed by the macrocyclase-peptidase enzyme POPB to yield a toxic cyclic octapeptide. POPB first removes 10 residues from the N-terminus. Conformational trapping of the remaining peptide forces the enzyme to release this intermediate rather than proceed to macrocyclization. The enzyme rebinds the remaining peptide in a different conformation and catalyzes macrocyclization of the N-terminal 8 residues. Expressed in basidiocarps.

Functionally, probable toxin that belongs to the MSDIN-like toxin family responsible for a large number of food poisoning cases and deaths. The sequence is that of MSDIN-like toxin proprotein 1 from Amanita exitialis (Guangzhou destroying angel).